The following is a 450-amino-acid chain: Cysteine protease ATG4C (450 aa).

Catalysis depends on cysteine 112, which acts as the Nucleophile. Active-site residues include aspartate 336 and histidine 338.

It belongs to the peptidase C54 family.

It is found in the cytoplasm. It catalyses the reaction [protein]-C-terminal L-amino acid-glycyl-phosphatidylethanolamide + H2O = [protein]-C-terminal L-amino acid-glycine + a 1,2-diacyl-sn-glycero-3-phosphoethanolamine. Functionally, cysteine protease that plays a key role in autophagy by mediating both proteolytic activation and delipidation of ATG8 family proteins. The protease activity is required for proteolytic activation of ATG8 family proteins: cleaves the C-terminal amino acid of ATG8 proteins to reveal a C-terminal glycine. Exposure of the glycine at the C-terminus is essential for ATG8 proteins conjugation to phosphatidylethanolamine (PE) and insertion to membranes, which is necessary for autophagy. In addition to the protease activity, also mediates delipidation of ATG8 family proteins. Catalyzes delipidation of PE-conjugated forms of ATG8 proteins during macroautophagy. This Xenopus tropicalis (Western clawed frog) protein is Cysteine protease ATG4C.